A 440-amino-acid polypeptide reads, in one-letter code: Ribosomal protein uS12 methylthiotransferase RimO (440 aa).

Residues 2 to 118 (KKAGIIHLGC…FVSLITSNGE (117 aa)) enclose the MTTase N-terminal domain. Residues cysteine 11, cysteine 47, cysteine 81, cysteine 154, cysteine 158, and cysteine 161 each contribute to the [4Fe-4S] cluster site. The Radical SAM core domain maps to 140-370 (ISPNFWVYVK…MSTQKEISKK (231 aa)). Residues 373-440 (AKLLGREFDV…RAYDLLGELV (68 aa)) enclose the TRAM domain.

It belongs to the methylthiotransferase family. RimO subfamily. Requires [4Fe-4S] cluster as cofactor.

It localises to the cytoplasm. It catalyses the reaction L-aspartate(89)-[ribosomal protein uS12]-hydrogen + (sulfur carrier)-SH + AH2 + 2 S-adenosyl-L-methionine = 3-methylsulfanyl-L-aspartate(89)-[ribosomal protein uS12]-hydrogen + (sulfur carrier)-H + 5'-deoxyadenosine + L-methionine + A + S-adenosyl-L-homocysteine + 2 H(+). Catalyzes the methylthiolation of an aspartic acid residue of ribosomal protein uS12. The protein is Ribosomal protein uS12 methylthiotransferase RimO of Dictyoglomus thermophilum (strain ATCC 35947 / DSM 3960 / H-6-12).